Reading from the N-terminus, the 299-residue chain is Ankyrin repeat domain-containing protein 54 (299 aa).

The segment at 1–27 (MAATGGGAEDESRSGRSSSEGECAVAP) is disordered. Ala-2 is modified (N-acetylalanine). Ser-62 bears the Phosphoserine mark. The Nuclear localization signal (NLS) signature appears at 98 to 116 (RRLGPTGKEVHALKRLRDS). 4 ANK repeats span residues 108–137 (HALKRLRDSANANDIETVQQLLEDGADPCA), 141–170 (KGRTALHFASCNGNDQIVQLLLDHGADPNQ), 174–203 (LGNTPLHLAACTNHVPVITTLLRGGARVDA), and 207–239 (AGRTPLHLAKSKLNILQEGHSQCLEAVRLEVKQ). The LYN-binding stretch occupies residues 140-240 (DKGRTALHFA…EAVRLEVKQI (101 aa)). A Nuclear export signal (NES) motif is present at residues 282-292 (LLASFTSLSLQ).

In terms of assembly, interacts (via ankyrin repeat region) with LYN (via SH3-domain) in an activation-independent status of LYN. Forms a multiprotein complex with LYN and HCLS1. Interacts with TSN2, VAV1, DBNL and LASP1.

The protein resides in the nucleus. The protein localises to the cytoplasm. Its subcellular location is the midbody. Plays an important role in regulating intracellular signaling events associated with erythroid terminal differentiation. In Rattus norvegicus (Rat), this protein is Ankyrin repeat domain-containing protein 54 (Ankrd54).